Here is a 953-residue protein sequence, read N- to C-terminus: ATP-dependent 6-phosphofructokinase (953 aa).

The tract at residues 1 to 558 (MIEGISFASF…QLQGFLLTNS (558 aa)) is N-terminal catalytic PFK domain 1. Residues glycine 193, 256 to 257 (RC), and 286 to 289 (GDGS) each bind ATP. Aspartate 287 serves as a coordination point for Mg(2+). Substrate contacts are provided by residues 332-334 (SID), arginine 369, 376-378 (MGR), glutamate 433, arginine 460, and 466-469 (HVQR). The active-site Proton acceptor is aspartate 334. Residues 559–572 (ADKDRPQEPAKDPL) are interdomain linker. The tract at residues 573-953 (RVAIVCTGAP…AKEQGIIDPC (381 aa)) is C-terminal regulatory PFK domain 2. Beta-D-fructose 2,6-bisphosphate contacts are provided by residues arginine 645, 702-706 (TISNN), arginine 740, 747-749 (QGG), glutamate 807, arginine 833, 839-842 (HVQQ), and arginine 906.

It belongs to the phosphofructokinase type A (PFKA) family. ATP-dependent PFK group I subfamily. Eukaryotic two domain clade 'E' sub-subfamily. In terms of assembly, heterooctamer of 4 alpha and 4 beta chains. It depends on Mg(2+) as a cofactor.

It is found in the cytoplasm. The enzyme catalyses beta-D-fructose 6-phosphate + ATP = beta-D-fructose 1,6-bisphosphate + ADP + H(+). It participates in carbohydrate degradation; glycolysis; D-glyceraldehyde 3-phosphate and glycerone phosphate from D-glucose: step 3/4. Its activity is regulated as follows. Allosterically activated by ADP, AMP, or fructose 2,6-bisphosphate, and allosterically inhibited by ATP or citrate. In terms of biological role, catalyzes the phosphorylation of D-fructose 6-phosphate to fructose 1,6-bisphosphate by ATP, the first committing step of glycolysis. The protein is ATP-dependent 6-phosphofructokinase (PFK1) of Yarrowia lipolytica (strain CLIB 122 / E 150) (Yeast).